Reading from the N-terminus, the 504-residue chain is Probable cytosol aminopeptidase (504 aa).

Lys276 and Asp281 together coordinate Mn(2+). Lys288 is an active-site residue. The Mn(2+) site is built by Asp299, Asp358, and Glu360. Arg362 is an active-site residue.

Belongs to the peptidase M17 family. Mn(2+) is required as a cofactor.

Its subcellular location is the cytoplasm. The enzyme catalyses Release of an N-terminal amino acid, Xaa-|-Yaa-, in which Xaa is preferably Leu, but may be other amino acids including Pro although not Arg or Lys, and Yaa may be Pro. Amino acid amides and methyl esters are also readily hydrolyzed, but rates on arylamides are exceedingly low.. It carries out the reaction Release of an N-terminal amino acid, preferentially leucine, but not glutamic or aspartic acids.. In terms of biological role, presumably involved in the processing and regular turnover of intracellular proteins. Catalyzes the removal of unsubstituted N-terminal amino acids from various peptides. The sequence is that of Probable cytosol aminopeptidase from Bordetella avium (strain 197N).